The sequence spans 412 residues: Acyl-[acyl-carrier-protein] hydrolase FATB2, chloroplastic (412 aa).

Low complexity-rich tracts occupy residues 1-13 and 56-66; these read TAAS…VPSA and GSSVGLKSGGL. The N-terminal 46 residues, 1-46, are a transit peptide targeting the chloroplast; it reads TAASSAFFPVPSADTSSRPGKLGNGPSSFSPLKPKSIPNGGLQVKA. Positions 1 to 78 are disordered; it reads TAASSAFFPV…HDDAPSAPPP (78 aa). Active-site residues include asparagine 311, histidine 313, and cysteine 348.

The protein belongs to the acyl-ACP thioesterase family.

It localises to the plastid. The protein localises to the chloroplast. The catalysed reaction is tetradecanoyl-[ACP] + H2O = tetradecanoate + holo-[ACP] + H(+). It catalyses the reaction hexadecanoyl-[ACP] + H2O = hexadecanoate + holo-[ACP] + H(+). In terms of biological role, plays an essential role in chain termination during de novo fatty acid synthesis. Possesses thioesterase activity for medium chain acyl-ACPs. Substrate preference is 14:0 &gt; 16:0 &gt; 16:1. In Cuphea viscosissima (Blue waxweed), this protein is Acyl-[acyl-carrier-protein] hydrolase FATB2, chloroplastic.